Here is a 435-residue protein sequence, read N- to C-terminus: GPI-anchor transamidase component PIGU (435 aa).

The Cytoplasmic portion of the chain corresponds to 2-3 (AA). The chain crosses the membrane as a helical span at residues 4-22 (PLVLVLVVAVTVRAALFRS). Residues 23-78 (SLAEFISERVEVVSPLSSWKRVVEGLSLLDLGVSPYSGAVFHETPLIIYLFHFLID) lie on the Lumenal side of the membrane. A helical transmembrane segment spans residues 79–99 (YAELVFMITDALTAIALYFAI). The Cytoplasmic segment spans residues 100 to 136 (QDFNKVVFKKQKLLLELDQYAPDVAELIRTPMEMRYI). Transmembrane regions (helical) follow at residues 137–158 (PLKV…VAKS), 159–178 (TCAI…IKGS), 179–194 (AFLS…YQSL), and 195–205 (YPLTLFVPGLL). At 206 to 222 (YLLQRQYIPVKMKSKAF) the chain is on the cytoplasmic side. Residues Lys216 and Met217 each contribute to the a cardiolipin site. Residues 223–244 (WIFSWEYAMMYVGSLVVIICLS) traverse the membrane as a helical segment. Over 245–286 (FFLLSSWDFIPAVYGFILSVPDLTPNIGLFWYFFAEMFEHFS) the chain is Lumenal. Residues 287-306 (LFFVCVFQINVFFYTIPLAI) form a helical membrane-spanning segment. Topologically, residues 307–311 (KLKEH) are cytoplasmic. Lys309 is an a cardiolipin binding site. The next 2 membrane-spanning stretches (helical) occupy residues 312–331 (PIFF…SYPT) and 332–345 (VGDV…FPVW). The Cytoplasmic segment spans residues 346–354 (NHLYRFLRN). The helical transmembrane segment at 355–372 (IFVLTCIIIVCSLLFPVL) threads the bilayer. At 373 to 384 (WHLWIYAGSANS) the chain is on the lumenal side. A 2-acyl-6-[6-phosphoethanolamine-alpha-D-mannosyl-(1-&gt;2)-6-phosphoethanolamine-alpha-D-mannosyl-(1-&gt;6)-2-phosphoethanolamine-alpha-D-mannosyl-(1-&gt;4)-alpha-D-glucosaminyl]-1-(1-radyl,2-acyl-sn-glycero-3-phospho)-1D-myo-inositol contacts are provided by Asn383 and Asn385. Residues 385–406 (NFFYAITLTFNVGQILLISDYF) form a helical membrane-spanning segment. Residues 407-435 (YAFLRREYYLTHGLYLTAKDGTEAMLVLK) lie on the Cytoplasmic side of the membrane.

Belongs to the PIGU family. Heteropentamer. Part of the GPI-anchor transamidase complex, consisting of PIGK, PIGT, PIGS, PIGU and GAA1.

The protein localises to the endoplasmic reticulum membrane. Its pathway is glycolipid biosynthesis; glycosylphosphatidylinositol-anchor biosynthesis. Component of the glycosylphosphatidylinositol-anchor (GPI-anchor) transamidase (GPI-T) complex that catalyzes the formation of the linkage between a proprotein and a GPI-anchor and participates in GPI anchored protein biosynthesis. Binds the lipid portion of GPI-anchor. May act as an organizer in the transmembrane layer to recruit other subunits, and thus is essential for assembly of the complex. In Homo sapiens (Human), this protein is GPI-anchor transamidase component PIGU.